The sequence spans 326 residues: MLTLARQQQRQNIRWLLCLSVLMLLALLLSLCAGEQWILPGDWFSPRGELFVWQIRLPRTLAVLLVGAALAISGAVMQALFENPLAEPGLLGVSNGAGVGLIAAVLLGQGQLPNWALGLCAIAGALIITLILLRFARRHLSTSRLLLAGVALGIICSALMTWAIYFSTSVDLRQLMYWMMGGFGGVDWRQSWLMVALIPVLLWICCQSRPMNMLALGEISARQLGLPLWFWRNVLVAATGWMVGVSVALAGAIGFIGLVIPHILRLCGLTDHRVLLPGCALAGASALLLADIVARLALAAAELPIGVVTATLGAPVFIWLLLKAGR.

Residues methionine 1–arginine 10 are Cytoplasmic-facing. Residues glutamine 11 to glutamate 35 traverse the membrane as a helical segment. At glutamine 36 to arginine 56 the chain is on the periplasmic side. A helical membrane pass occupies residues leucine 57–phenylalanine 81. Residues glutamate 82–glycine 92 are Cytoplasmic-facing. A helical membrane pass occupies residues valine 93–leucine 107. The Periplasmic segment spans residues glycine 108–proline 113. Residues asparagine 114–arginine 138 traverse the membrane as a helical segment. The Cytoplasmic segment spans residues histidine 139 to serine 141. Residues threonine 142–phenylalanine 166 form a helical membrane-spanning segment. Residues serine 167–glutamine 190 lie on the Periplasmic side of the membrane. The chain crosses the membrane as a helical span at residues serine 191–cysteine 206. Topologically, residues glutamine 207–leucine 228 are cytoplasmic. A helical transmembrane segment spans residues tryptophan 229–leucine 249. The Periplasmic segment spans residues alanine 250–glycine 257. Residues leucine 258–cysteine 267 form a helical membrane-spanning segment. Over glycine 268–valine 274 the chain is Cytoplasmic. Residues leucine 275–leucine 296 traverse the membrane as a helical segment. The Periplasmic segment spans residues alanine 297 to proline 304. Residues isoleucine 305–alanine 324 form a helical membrane-spanning segment. The Cytoplasmic portion of the chain corresponds to glycine 325–arginine 326.

This sequence belongs to the binding-protein-dependent transport system permease family. FecCD subfamily. The complex is composed of two ATP-binding proteins (BtuD), two transmembrane proteins (BtuC) and a solute-binding protein (BtuF).

Its subcellular location is the cell inner membrane. Part of the ABC transporter complex BtuCDF involved in vitamin B12 import. Involved in the translocation of the substrate across the membrane. This Escherichia coli O6:H1 (strain CFT073 / ATCC 700928 / UPEC) protein is Vitamin B12 import system permease protein BtuC (btuC).